Consider the following 464-residue polypeptide: Protein FAM90A15 (464 aa).

Disordered stretches follow at residues M1–L42, P70–A389, and H415–P437. 2 stretches are compositionally biased toward basic and acidic residues: residues G74–V89 and N97–R114. Positions L180–L197 are enriched in low complexity.

This sequence belongs to the FAM90 family.

The sequence is that of Protein FAM90A15 from Homo sapiens (Human).